Here is a 218-residue protein sequence, read N- to C-terminus: Adenylate kinase (218 aa).

10-15 serves as a coordination point for ATP; that stretch reads GAGKGT. An NMP region spans residues 30–59; sequence STGDMLRAAVKEETPLGRKAKEVMDSGNLV. AMP is bound by residues Thr-31, Arg-36, 57–59, 85–88, and Gln-92; these read NLV and GFPR. The tract at residues 122–159 is LID; it reads GRRVHPASGRTYHLTFNPPQQQGVDDETGEPLIQRVDD. ATP-binding positions include Arg-123 and 132-133; that span reads TY. The AMP site is built by Arg-156 and Arg-167. Gly-203 is an ATP binding site.

The protein belongs to the adenylate kinase family. In terms of assembly, monomer.

The protein localises to the cytoplasm. The catalysed reaction is AMP + ATP = 2 ADP. It participates in purine metabolism; AMP biosynthesis via salvage pathway; AMP from ADP: step 1/1. Functionally, catalyzes the reversible transfer of the terminal phosphate group between ATP and AMP. Plays an important role in cellular energy homeostasis and in adenine nucleotide metabolism. This is Adenylate kinase from Chlorobium phaeovibrioides (strain DSM 265 / 1930) (Prosthecochloris vibrioformis (strain DSM 265)).